The following is a 348-amino-acid chain: Noscapine synthase SDR1 (348 aa).

The protein belongs to the NAD(P)-dependent epimerase/dehydratase family.

It catalyses the reaction narcotine hemiacetal + NAD(+) = noscapine + NADH + H(+). Its pathway is alkaloid biosynthesis. Its function is as follows. Oxidoreductase that catalyzes the last step in the biosynthesis of the benzylisoquinoline alkaloid noscapine. Converts narcotine hemiacetal to noscapine. The sequence is that of Noscapine synthase SDR1 from Papaver somniferum (Opium poppy).